A 584-amino-acid chain; its full sequence is Delta 8-(E)-sphingolipid desaturase (584 aa).

One can recognise a Cytochrome b5 heme-binding domain in the interval Lys7 to Glu82. Heme is bound by residues His42 and His65. Residues Asn109–Glu134 are disordered. A helical transmembrane segment spans residues Leu261–Met281. The Histidine box-1 signature appears at His293 to His297. A helical membrane pass occupies residues Ile306–Trp326. The Histidine box-2 motif lies at His330–His334. 3 helical membrane passes run Tyr386–Ser403, Tyr423–Lys443, and Val455–Ala475. The short motif at Gln514–His518 is the Histidine box-3 element.

This sequence belongs to the fatty acid desaturase type 1 family.

The protein resides in the membrane. The enzyme catalyses an N-acylsphing-4-enine + 2 Fe(II)-[cytochrome b5] + O2 + 2 H(+) = a (4E,8E)-4-sphinga-4,8-dienine ceramide + 2 Fe(III)-[cytochrome b5] + 2 H2O. Its pathway is lipid metabolism; sphingolipid metabolism. Its function is as follows. Delta(8)-fatty-acid desaturase which introduces a double bond at the 8-position in the long-chain base (LCB) of ceramides. Required for the formation of the di-unsaturated sphingoid base (E,E)-sphinga-4,8-dienine during glucosylceramide (GluCer) biosynthesis. This Candida albicans (strain SC5314 / ATCC MYA-2876) (Yeast) protein is Delta 8-(E)-sphingolipid desaturase.